The sequence spans 376 residues: UDP-N-acetylglucosamine--N-acetylmuramyl-(pentapeptide) pyrophosphoryl-undecaprenol N-acetylglucosamine transferase (376 aa).

UDP-N-acetyl-alpha-D-glucosamine-binding positions include 12-14 (TAG), N126, R163, S198, and Q296.

The protein belongs to the glycosyltransferase 28 family. MurG subfamily.

Its subcellular location is the cell membrane. It catalyses the reaction di-trans,octa-cis-undecaprenyl diphospho-N-acetyl-alpha-D-muramoyl-L-alanyl-D-glutamyl-meso-2,6-diaminopimeloyl-D-alanyl-D-alanine + UDP-N-acetyl-alpha-D-glucosamine = di-trans,octa-cis-undecaprenyl diphospho-[N-acetyl-alpha-D-glucosaminyl-(1-&gt;4)]-N-acetyl-alpha-D-muramoyl-L-alanyl-D-glutamyl-meso-2,6-diaminopimeloyl-D-alanyl-D-alanine + UDP + H(+). The protein operates within cell wall biogenesis; peptidoglycan biosynthesis. Its function is as follows. Cell wall formation. Catalyzes the transfer of a GlcNAc subunit on undecaprenyl-pyrophosphoryl-MurNAc-pentapeptide (lipid intermediate I) to form undecaprenyl-pyrophosphoryl-MurNAc-(pentapeptide)GlcNAc (lipid intermediate II). The polypeptide is UDP-N-acetylglucosamine--N-acetylmuramyl-(pentapeptide) pyrophosphoryl-undecaprenol N-acetylglucosamine transferase (Frankia casuarinae (strain DSM 45818 / CECT 9043 / HFP020203 / CcI3)).